Reading from the N-terminus, the 750-residue chain is Neprilysin (750 aa).

Gly-2 is lipidated: N-myristoyl glycine. The Cytoplasmic portion of the chain corresponds to 2–28; the sequence is GRSESQMDITDINAPKPKKKQRWTPLE. Residues Ser-4 and Ser-6 each carry the phosphoserine modification. Residues 16 to 23 carry the Stop-transfer sequence motif; sequence PKPKKKQR. A helical; Signal-anchor for type II membrane protein transmembrane segment spans residues 29–51; it reads ISLSVLVLLLTIIAVTMIALYAT. The Extracellular portion of the chain corresponds to 52 to 750; the sequence is YDDGICKSSD…MNPERKCRVW (699 aa). One can recognise a Peptidase M13 domain in the interval 56–750; the sequence is ICKSSDCIKS…MNPERKCRVW (695 aa). 6 cysteine pairs are disulfide-bonded: Cys-57-Cys-62, Cys-80-Cys-735, Cys-88-Cys-695, Cys-143-Cys-411, Cys-234-Cys-242, and Cys-621-Cys-747. An a peptide-binding site is contributed by Arg-103. N-linked (GlcNAc...) asparagine glycosylation is found at Asn-145 and Asn-211. N-linked (GlcNAc...) asparagine glycosylation is found at Asn-285, Asn-311, and Asn-325. His-584 is a Zn(2+) binding site. Glu-585 is an active-site residue. His-588 provides a ligand contact to Zn(2+). N-linked (GlcNAc...) asparagine glycosylation is present at Asn-628. Glu-647 is a binding site for Zn(2+). The Proton donor role is filled by Asp-651.

This sequence belongs to the peptidase M13 family. It depends on Zn(2+) as a cofactor. Myristoylation is a determinant of membrane targeting. In terms of processing, glycosylation at Asn-628 is necessary both for surface expression and neutral endopeptidase activity.

The protein resides in the cell membrane. The catalysed reaction is Preferential cleavage of polypeptides between hydrophobic residues, particularly with Phe or Tyr at P1'.. It catalyses the reaction substance P + H2O = substance P(1-9) + L-Leu-L-Met-NH2. It carries out the reaction substance P + H2O = substance P(1-7) + L-Phe-Gly-L-Leu-L-Met-NH2. The enzyme catalyses neurotensin + H2O = neurotensin(1-11) + L-isoleucyl-L-leucine. The catalysed reaction is neurotensin + H2O = neurotensin(1-10) + L-tyrosyl-L-isoleucyl-L-leucine. Its function is as follows. Thermolysin-like specificity, but is almost confined on acting on polypeptides of up to 30 amino acids. Biologically important in the destruction of opioid peptides such as Met- and Leu-enkephalins by cleavage of a Gly-Phe bond. Catalyzes cleavage of bradykinin, substance P and neurotensin peptides. Able to cleave angiotensin-1, angiotensin-2 and angiotensin 1-9. Involved in the degradation of the atrial natriuretic factor (ANF). Displays UV-inducible elastase activity toward skin preelastic and elastic fibers. The polypeptide is Neprilysin (Mus musculus (Mouse)).